The primary structure comprises 266 residues: Large ribosomal subunit protein uL3 (266 aa).

A disordered region spans residues 124-149; that stretch reads NQKIGPKSHGGGGGSKPVRQTGSLGD.

It belongs to the universal ribosomal protein uL3 family. Part of the 50S ribosomal subunit. Forms a cluster with proteins L14 and L19.

Its function is as follows. One of the primary rRNA binding proteins, it binds directly near the 3'-end of the 23S rRNA, where it nucleates assembly of the 50S subunit. This is Large ribosomal subunit protein uL3 from Mycoplasmopsis pulmonis (strain UAB CTIP) (Mycoplasma pulmonis).